A 109-amino-acid chain; its full sequence is Putative double-stranded DNA mimic protein KPK_2119 (109 aa).

This sequence belongs to the putative dsDNA mimic protein family.

Functionally, may act as a double-stranded DNA (dsDNA) mimic. Probably regulates the activity of a dsDNA-binding protein. The protein is Putative double-stranded DNA mimic protein KPK_2119 of Klebsiella pneumoniae (strain 342).